The sequence spans 246 residues: Complement C1q tumor necrosis factor-related protein 3 (246 aa).

The signal sequence occupies residues 1 to 22 (MLGRQRIWWHLLPLLFLPFCLC). The Collagen-like domain maps to 51–113 (GYQGPPGPPG…KGEKGYPGVP (63 aa)). A disordered region spans residues 53–112 (QGPPGPPGPPGIPGNHGNNGNNGATGHEGAKGEKGDKGDLGPRGERGQHGPKGEKGYPGV). A compositionally biased stretch (pro residues) spans 55 to 64 (PPGPPGPPGI). Residues 65 to 74 (PGNHGNNGNN) are compositionally biased toward low complexity. A compositionally biased stretch (basic and acidic residues) spans 80-107 (EGAKGEKGDKGDLGPRGERGQHGPKGEK). Residues 113–246 (PPELQIAFMA…FAGFLLFETK (134 aa)) form the C1q domain.

Its subcellular location is the secreted. This Mus musculus (Mouse) protein is Complement C1q tumor necrosis factor-related protein 3 (C1qtnf3).